An 81-amino-acid chain; its full sequence is ATP synthase subunit C, plastid (81 aa).

The next 2 membrane-spanning stretches (helical) occupy residues 3–23 (PIIS…ASIG) and 57–77 (LAFM…LLFA).

The protein belongs to the ATPase C chain family. As to quaternary structure, F-type ATPases have 2 components, F(1) - the catalytic core - and F(0) - the membrane proton channel. F(1) has five subunits: alpha(3), beta(3), gamma(1), delta(1), epsilon(1). F(0) has four main subunits: a(1), b(1), b'(1) and c(10-14). The alpha and beta chains form an alternating ring which encloses part of the gamma chain. F(1) is attached to F(0) by a central stalk formed by the gamma and epsilon chains, while a peripheral stalk is formed by the delta, b and b' chains.

It is found in the plastid membrane. In terms of biological role, f(1)F(0) ATP synthase produces ATP from ADP in the presence of a proton or sodium gradient. F-type ATPases consist of two structural domains, F(1) containing the extramembraneous catalytic core and F(0) containing the membrane proton channel, linked together by a central stalk and a peripheral stalk. During catalysis, ATP synthesis in the catalytic domain of F(1) is coupled via a rotary mechanism of the central stalk subunits to proton translocation. Its function is as follows. Key component of the F(0) channel; it plays a direct role in translocation across the membrane. A homomeric c-ring of between 10-14 subunits forms the central stalk rotor element with the F(1) delta and epsilon subunits. This chain is ATP synthase subunit C, plastid, found in Cuscuta gronovii (Common dodder).